Consider the following 232-residue polypeptide: Lipoprotein-releasing system ATP-binding protein LolD 1 (232 aa).

In terms of domain architecture, ABC transporter spans 11–231 (VYLHDVKRQY…SIQDGLVVEL (221 aa)). 47 to 54 (APSGAGKS) lines the ATP pocket.

The protein belongs to the ABC transporter superfamily. Lipoprotein translocase (TC 3.A.1.125) family. In terms of assembly, the complex is composed of two ATP-binding proteins (LolD) and two transmembrane proteins (LolC and LolE).

The protein resides in the cell inner membrane. Its function is as follows. Part of the ABC transporter complex LolCDE involved in the translocation of mature outer membrane-directed lipoproteins, from the inner membrane to the periplasmic chaperone, LolA. Responsible for the formation of the LolA-lipoprotein complex in an ATP-dependent manner. This Rhodopseudomonas palustris (strain BisB18) protein is Lipoprotein-releasing system ATP-binding protein LolD 1.